Here is a 282-residue protein sequence, read N- to C-terminus: uncharacterized protein (282 aa).

The protein belongs to the ycf80 family.

It localises to the plastid. The protein localises to the chloroplast. This is an uncharacterized protein from Guillardia theta (Cryptophyte).